Consider the following 253-residue polypeptide: 3-deoxy-manno-octulosonate cytidylyltransferase (253 aa).

This sequence belongs to the KdsB family.

Its subcellular location is the cytoplasm. It carries out the reaction 3-deoxy-alpha-D-manno-oct-2-ulosonate + CTP = CMP-3-deoxy-beta-D-manno-octulosonate + diphosphate. Its pathway is nucleotide-sugar biosynthesis; CMP-3-deoxy-D-manno-octulosonate biosynthesis; CMP-3-deoxy-D-manno-octulosonate from 3-deoxy-D-manno-octulosonate and CTP: step 1/1. The protein operates within bacterial outer membrane biogenesis; lipopolysaccharide biosynthesis. Its function is as follows. Activates KDO (a required 8-carbon sugar) for incorporation into bacterial lipopolysaccharide in Gram-negative bacteria. This is 3-deoxy-manno-octulosonate cytidylyltransferase from Edwardsiella ictaluri (strain 93-146).